Here is a 268-residue protein sequence, read N- to C-terminus: Putative carbamate hydrolase RutD (268 aa).

In terms of domain architecture, AB hydrolase-1 spans 15 to 119 (PVMVMIAGLG…VIVNGWLSLS (105 aa)).

This sequence belongs to the AB hydrolase superfamily. Hydrolase RutD family.

It catalyses the reaction carbamate + 2 H(+) = NH4(+) + CO2. Functionally, involved in pyrimidine catabolism. May facilitate the hydrolysis of carbamate, a reaction that can also occur spontaneously. This chain is Putative carbamate hydrolase RutD, found in Cronobacter sakazakii (strain ATCC BAA-894) (Enterobacter sakazakii).